Consider the following 417-residue polypeptide: Aminoacyltransferase FemB (417 aa).

Belongs to the FemABX family.

It is found in the cytoplasm. It catalyses the reaction MurNAc-L-Ala-D-isoglutaminyl-L-Lys-(N(6)-tri-Gly)-D-Ala-D-Ala-diphospho-di-trans,octa-cis-undecaprenyl-GlcNAc + 2 glycyl-tRNA(Gly) = MurNAc-L-Ala-D-isoglutaminyl-L-Lys-(N(6)-penta-Gly)-D-Ala-D-Ala-diphospho-di-trans,octa-cis-undecaprenyl-GlcNAc + 2 tRNA(Gly) + 2 H(+). Catalyzes the incorporation of amino acid(s) into the interchain peptide bridge of peptidoglycan, using aminoacyl-tRNA as amino acid donor. The chain is Aminoacyltransferase FemB (femB) from Staphylococcus epidermidis (strain ATCC 12228 / FDA PCI 1200).